Here is a 634-residue protein sequence, read N- to C-terminus: Glutamyl-tRNA(Gln) amidotransferase subunit E (634 aa).

Belongs to the GatB/GatE family. GatE subfamily. Heterodimer of GatD and GatE.

The enzyme catalyses L-glutamyl-tRNA(Gln) + L-glutamine + ATP + H2O = L-glutaminyl-tRNA(Gln) + L-glutamate + ADP + phosphate + H(+). Functionally, allows the formation of correctly charged Gln-tRNA(Gln) through the transamidation of misacylated Glu-tRNA(Gln) in organisms which lack glutaminyl-tRNA synthetase. The reaction takes place in the presence of glutamine and ATP through an activated gamma-phospho-Glu-tRNA(Gln). The GatDE system is specific for glutamate and does not act on aspartate. The polypeptide is Glutamyl-tRNA(Gln) amidotransferase subunit E (Sulfolobus acidocaldarius (strain ATCC 33909 / DSM 639 / JCM 8929 / NBRC 15157 / NCIMB 11770)).